The following is a 234-amino-acid chain: Uridylate kinase (234 aa).

9–12 (KLSG) contacts ATP. Gly51 contributes to the UMP binding site. Gly52 and Arg56 together coordinate ATP. Residues Asp71 and 132–139 (CGNPFFTT) contribute to the UMP site. ATP is bound by residues Thr159, Tyr165, and Asp168.

It belongs to the UMP kinase family. As to quaternary structure, homohexamer.

It is found in the cytoplasm. The enzyme catalyses UMP + ATP = UDP + ADP. The protein operates within pyrimidine metabolism; CTP biosynthesis via de novo pathway; UDP from UMP (UMPK route): step 1/1. With respect to regulation, inhibited by UTP. Its function is as follows. Catalyzes the reversible phosphorylation of UMP to UDP. This is Uridylate kinase from Prochlorococcus marinus (strain MIT 9215).